The chain runs to 96 residues: MKIAITITVLMLSICCSSASSDICPGFLQVLEALLLGSESNYEAALKPFNPASDLQNAGTQLKRLVDTLPQETRINIVKLTEKILTSPLCEQDLRV.

The N-terminal stretch at 1 to 19 (MKIAITITVLMLSICCSSA) is a signal peptide.

The protein belongs to the secretoglobin family. Antiparallel homodimer; disulfide-linked. Interaction with LMBR1L is controversial. As to expression, club cells (nonciliated cells of the surface epithelium of the pulmonary airways).

The protein resides in the secreted. Its function is as follows. Binds phosphatidylcholine, phosphatidylinositol, polychlorinated biphenyls (PCB) and weakly progesterone, potent inhibitor of phospholipase A2. The protein is Uteroglobin (Scgb1a1) of Rattus norvegicus (Rat).